A 317-amino-acid polypeptide reads, in one-letter code: Acetyl-coenzyme A carboxylase carboxyl transferase subunit alpha (317 aa).

The 262-residue stretch at asparagine 33–aspartate 294 folds into the CoA carboxyltransferase C-terminal domain.

The protein belongs to the AccA family. In terms of assembly, acetyl-CoA carboxylase is a heterohexamer composed of biotin carboxyl carrier protein (AccB), biotin carboxylase (AccC) and two subunits each of ACCase subunit alpha (AccA) and ACCase subunit beta (AccD).

The protein localises to the cytoplasm. It carries out the reaction N(6)-carboxybiotinyl-L-lysyl-[protein] + acetyl-CoA = N(6)-biotinyl-L-lysyl-[protein] + malonyl-CoA. Its pathway is lipid metabolism; malonyl-CoA biosynthesis; malonyl-CoA from acetyl-CoA: step 1/1. Functionally, component of the acetyl coenzyme A carboxylase (ACC) complex. First, biotin carboxylase catalyzes the carboxylation of biotin on its carrier protein (BCCP) and then the CO(2) group is transferred by the carboxyltransferase to acetyl-CoA to form malonyl-CoA. This chain is Acetyl-coenzyme A carboxylase carboxyl transferase subunit alpha, found in Histophilus somni (strain 2336) (Haemophilus somnus).